Here is a 132-residue protein sequence, read N- to C-terminus: S-adenosylmethionine decarboxylase proenzyme (132 aa).

S65 serves as the catalytic Schiff-base intermediate with substrate; via pyruvic acid. Position 65 is a pyruvic acid (Ser); by autocatalysis (S65). H70 serves as the catalytic Proton acceptor; for processing activity. C85 functions as the Proton donor; for catalytic activity in the catalytic mechanism.

Belongs to the prokaryotic AdoMetDC family. Type 1 subfamily. In terms of assembly, heterotetramer of two alpha and two beta chains arranged as a dimer of alpha/beta heterodimers. Requires pyruvate as cofactor. Post-translationally, is synthesized initially as an inactive proenzyme. Formation of the active enzyme involves a self-maturation process in which the active site pyruvoyl group is generated from an internal serine residue via an autocatalytic post-translational modification. Two non-identical subunits are generated from the proenzyme in this reaction, and the pyruvate is formed at the N-terminus of the alpha chain, which is derived from the carboxyl end of the proenzyme. The post-translation cleavage follows an unusual pathway, termed non-hydrolytic serinolysis, in which the side chain hydroxyl group of the serine supplies its oxygen atom to form the C-terminus of the beta chain, while the remainder of the serine residue undergoes an oxidative deamination to produce ammonia and the pyruvoyl group blocking the N-terminus of the alpha chain.

It carries out the reaction S-adenosyl-L-methionine + H(+) = S-adenosyl 3-(methylsulfanyl)propylamine + CO2. It participates in amine and polyamine biosynthesis; S-adenosylmethioninamine biosynthesis; S-adenosylmethioninamine from S-adenosyl-L-methionine: step 1/1. In terms of biological role, catalyzes the decarboxylation of S-adenosylmethionine to S-adenosylmethioninamine (dcAdoMet), the propylamine donor required for the synthesis of the polyamines spermine and spermidine from the diamine putrescine. This is S-adenosylmethionine decarboxylase proenzyme from Symbiobacterium thermophilum (strain DSM 24528 / JCM 14929 / IAM 14863 / T).